The following is a 294-amino-acid chain: Acetylglutamate kinase (294 aa).

Residues 66 to 67, Arg88, and Asn193 each bind substrate; that span reads GG.

Belongs to the acetylglutamate kinase family. ArgB subfamily.

The protein resides in the cytoplasm. The catalysed reaction is N-acetyl-L-glutamate + ATP = N-acetyl-L-glutamyl 5-phosphate + ADP. Its pathway is amino-acid biosynthesis; L-arginine biosynthesis; N(2)-acetyl-L-ornithine from L-glutamate: step 2/4. Its function is as follows. Catalyzes the ATP-dependent phosphorylation of N-acetyl-L-glutamate. This Agrobacterium fabrum (strain C58 / ATCC 33970) (Agrobacterium tumefaciens (strain C58)) protein is Acetylglutamate kinase.